The sequence spans 1026 residues: Multidrug resistance protein MdtC (1026 aa).

Transmembrane regions (helical) follow at residues 16–36 (LLALAITLVGLLGLRLLPVAP), 333–353 (EVEQSLAIAIALVILVVFLFL), 360–380 (LIPAVTVPVSLIGTCAAIYLC), 387–407 (LSLMALTIASGFVVDDAIVVL), 435–455 (VFSISLSLAAVFIPLLFMGGI), 459–479 (LFHEFAITLSASIAISLLIAL), 528–548 (WVLLTLLAVIGLNIWLYISIP), 853–873 (LLLILAAIATVYIVLGILYES), 897–917 (LFNAPFSLIALIGIMLLIGLV), 953–973 (PILMTTLAALFGALPLAFSYG), and 984–1004 (ITIVGGLLVSQILTLYTTPVV).

Belongs to the resistance-nodulation-cell division (RND) (TC 2.A.6) family. MdtC subfamily. As to quaternary structure, part of a tripartite efflux system composed of MdtA, MdtB and MdtC. MdtC forms a heteromultimer with MdtB.

The protein resides in the cell inner membrane. This chain is Multidrug resistance protein MdtC, found in Edwardsiella ictaluri (strain 93-146).